A 287-amino-acid polypeptide reads, in one-letter code: Large ribosomal subunit protein uL2 (287 aa).

A disordered region spans residues 221 to 287 (RGSVMNPCDH…SKRSRGGRDS (67 aa)). Basic residues predominate over residues 258-287 (KTRKRNKPSNRFVLRKRRRVSKRSRGGRDS).

It belongs to the universal ribosomal protein uL2 family. In terms of assembly, part of the 50S ribosomal subunit. Forms a bridge to the 30S subunit in the 70S ribosome.

In terms of biological role, one of the primary rRNA binding proteins. Required for association of the 30S and 50S subunits to form the 70S ribosome, for tRNA binding and peptide bond formation. It has been suggested to have peptidyltransferase activity; this is somewhat controversial. Makes several contacts with the 16S rRNA in the 70S ribosome. The protein is Large ribosomal subunit protein uL2 of Prochlorococcus marinus (strain SARG / CCMP1375 / SS120).